Here is an 892-residue protein sequence, read N- to C-terminus: Phenylalanine--tRNA ligase beta subunit (892 aa).

The tRNA-binding domain occupies 39–150; it reads NPGVEGVVVG…PGLEPGMDVA (112 aa). The region spanning 406 to 569 is the B5 domain; that stretch reads AVPPVILLRT…RCEGYDAIPL (164 aa). Residues 442 to 518 form an insert region; sequence VLTPADLAAD…ALLGGGESDG (77 aa). The Mg(2+) site is built by D547, D553, E556, and E557. Residues 799 to 891 enclose the FDX-ACB domain; it reads PRFPAVTRDV…ALKALGAELR (93 aa).

It belongs to the phenylalanyl-tRNA synthetase beta subunit family. Type 1 subfamily. As to quaternary structure, tetramer of two alpha and two beta subunits. Requires Mg(2+) as cofactor.

The protein localises to the cytoplasm. It carries out the reaction tRNA(Phe) + L-phenylalanine + ATP = L-phenylalanyl-tRNA(Phe) + AMP + diphosphate + H(+). The protein is Phenylalanine--tRNA ligase beta subunit of Symbiobacterium thermophilum (strain DSM 24528 / JCM 14929 / IAM 14863 / T).